The following is a 501-amino-acid chain: Lysine--tRNA ligase (501 aa).

Mg(2+) is bound by residues glutamate 411 and glutamate 418.

This sequence belongs to the class-II aminoacyl-tRNA synthetase family. In terms of assembly, homodimer. Requires Mg(2+) as cofactor.

Its subcellular location is the cytoplasm. The enzyme catalyses tRNA(Lys) + L-lysine + ATP = L-lysyl-tRNA(Lys) + AMP + diphosphate. This Clostridium perfringens (strain SM101 / Type A) protein is Lysine--tRNA ligase.